The chain runs to 446 residues: tRNA modification GTPase MnmE (446 aa).

Positions 24, 81, and 120 each coordinate (6S)-5-formyl-5,6,7,8-tetrahydrofolate. In terms of domain architecture, TrmE-type G spans 216–368 (GLHAVLIGPP…LHIRLRALAL (153 aa)). Asparagine 226 contributes to the K(+) binding site. Residues 226 to 231 (NAGKSS), 245 to 251 (TDVAGTT), and 270 to 273 (DTAG) each bind GTP. Serine 230 contributes to the Mg(2+) binding site. K(+) contacts are provided by threonine 245, valine 247, and threonine 250. Threonine 251 provides a ligand contact to Mg(2+). A (6S)-5-formyl-5,6,7,8-tetrahydrofolate-binding site is contributed by lysine 446.

The protein belongs to the TRAFAC class TrmE-Era-EngA-EngB-Septin-like GTPase superfamily. TrmE GTPase family. As to quaternary structure, homodimer. Heterotetramer of two MnmE and two MnmG subunits. K(+) is required as a cofactor.

It is found in the cytoplasm. Its function is as follows. Exhibits a very high intrinsic GTPase hydrolysis rate. Involved in the addition of a carboxymethylaminomethyl (cmnm) group at the wobble position (U34) of certain tRNAs, forming tRNA-cmnm(5)s(2)U34. The polypeptide is tRNA modification GTPase MnmE (Xanthomonas euvesicatoria pv. vesicatoria (strain 85-10) (Xanthomonas campestris pv. vesicatoria)).